A 139-amino-acid polypeptide reads, in one-letter code: Peptide methionine sulfoxide reductase MsrB (139 aa).

Positions 14–137 constitute a MsrB domain; the sequence is DEEWRRELTP…NSISLDFQPE (124 aa). Zn(2+) is bound by residues cysteine 53, cysteine 56, cysteine 102, and cysteine 105. Cysteine 126 serves as the catalytic Nucleophile.

It belongs to the MsrB Met sulfoxide reductase family. The cofactor is Zn(2+).

It carries out the reaction L-methionyl-[protein] + [thioredoxin]-disulfide + H2O = L-methionyl-(R)-S-oxide-[protein] + [thioredoxin]-dithiol. The chain is Peptide methionine sulfoxide reductase MsrB from Leifsonia xyli subsp. xyli (strain CTCB07).